The primary structure comprises 122 residues: Large ribosomal subunit protein uL14 (122 aa).

It belongs to the universal ribosomal protein uL14 family. Part of the 50S ribosomal subunit. Forms a cluster with proteins L3 and L19. In the 70S ribosome, L14 and L19 interact and together make contacts with the 16S rRNA in bridges B5 and B8.

Binds to 23S rRNA. Forms part of two intersubunit bridges in the 70S ribosome. The protein is Large ribosomal subunit protein uL14 of Prosthecochloris aestuarii (strain DSM 271 / SK 413).